The primary structure comprises 751 residues: Centrosomal protein of 68 kDa (751 aa).

2 stretches are compositionally biased toward basic and acidic residues: residues 1 to 17 (MALGEEKAEAEASEDTK) and 86 to 96 (ASREPVAERSE). Residues 1–253 (MALGEEKAEA…PQPVFSGGDA (253 aa)) are disordered. 2 stretches are compositionally biased toward polar residues: residues 131-144 (LPQTPSLPRTTTIC) and 163-175 (APSSGLSCLSQWK). Positions 176–200 (SMPSPGSAAPQPSSCSVSASSTGSS) are enriched in low complexity. Ser326 bears the Phosphoserine mark. Polar residues predominate over residues 339-348 (STLKSPTNVF). 3 disordered regions span residues 339–474 (STLK…ESDD), 511–545 (SPLEVSDTDGPASLPSSSSQSQLPPGAALRGSGDP), and 590–611 (RLDRWPFSDPDAEGQLPRKGGE). 2 stretches are compositionally biased toward basic and acidic residues: residues 399–416 (GSRDARWECREPALRGAK) and 433–450 (RTRDRGWPSPRPEREKRT). Residues 451–461 (SQSARRPTCTE) are compositionally biased toward polar residues. 2 positions are modified to phosphoserine: Ser466 and Ser472. The segment covering 520 to 537 (GPASLPSSSSQSQLPPGA) has biased composition (low complexity).

In terms of assembly, interacts with CNTLN; the interaction recruits CEP68 to the centrosome. Interacts with the SCF(FBXW11) complex which contains SKP1, CUL1 and FBXW11; the interaction is probably mediated by FBXW11 and the complex also contains CDK5RAP2 and PCNT. Also interacts with F-box protein BTRC. Interacts with serine/threonine-protein kinase PLK1; the interaction leads to phosphorylation of CEP68 and its subsequent degradation. Interacts with NEK2; the interaction leads to phosphorylation of CEP68. Phosphorylation by PLK1 is required for binding to BTRC in prometaphase. Phosphorylated directly or indirectly by NEK2. NEK2-mediated phosphorylation promotes CEP68 dissociation from the centrosome and its degradation at the onset of mitosis. Post-translationally, ubiquitinated and targeted for proteasomal degradation in early mitosis by the SCF(BTRC) and/or SCF(FBXW11) E3 ubiquitin-protein ligase complexes. Degradation is complete by prometaphase and is required for removal of CDK5RAP2 from the peripheral pericentriolar material and subsequent centriole separation.

The protein resides in the cytoplasm. The protein localises to the cytoskeleton. Its subcellular location is the microtubule organizing center. It is found in the centrosome. Functionally, involved in maintenance of centrosome cohesion, probably as part of a linker structure which prevents centrosome splitting. Required for localization of CDK5RAP2 to the centrosome during interphase. Contributes to CROCC/rootletin filament formation. The polypeptide is Centrosomal protein of 68 kDa (CEP68) (Pongo abelii (Sumatran orangutan)).